A 298-amino-acid polypeptide reads, in one-letter code: Probable endonuclease 4 (298 aa).

Zn(2+) is bound by residues His-69, His-110, Glu-145, Asp-179, His-182, His-214, Asp-227, His-229, and Glu-259.

Belongs to the AP endonuclease 2 family. The cofactor is Zn(2+).

It catalyses the reaction Endonucleolytic cleavage to 5'-phosphooligonucleotide end-products.. Its function is as follows. Endonuclease IV plays a role in DNA repair. It cleaves phosphodiester bonds at apurinic or apyrimidinic (AP) sites, generating a 3'-hydroxyl group and a 5'-terminal sugar phosphate. The sequence is that of Probable endonuclease 4 from Geobacillus sp. (strain WCH70).